Consider the following 362-residue polypeptide: Ciliary neurotrophic factor receptor subunit alpha (362 aa).

The first 19 residues, 1–19 (MANPVPSACCVVLAAVVVV), serve as a signal peptide directing secretion. Residues 23 to 103 (RHSQQDSHIQ…HLKYQTYLRV (81 aa)) enclose the Ig-like C2-type domain. A disulfide bridge connects residues Cys44 and Cys87. N-linked (GlcNAc...) asparagine glycosylation is found at Asn58, Asn68, Asn140, and Asn188. 2 consecutive Fibronectin type-III domains span residues 106 to 203 (PPKE…VKPD) and 204 to 304 (PPES…TEEP). Positions 288–292 (WSDWS) match the WSXWS motif motif. Asp334 is lipidated: GPI-anchor amidated aspartate. A propeptide spans 335-362 (KGAGVGSGAVAVCWTAGLVLAAYGVLFI) (removed in mature form).

Belongs to the type I cytokine receptor family. Type 3 subfamily. As to quaternary structure, heterotrimer of the alpha subunit, LIFR and IL6ST. In terms of tissue distribution, highly expressed in nervous system. Also found in skeletal muscle.

It is found in the cell membrane. Functionally, binds to CNTF (GPA). The alpha subunit provides the receptor specificity. This is Ciliary neurotrophic factor receptor subunit alpha (CNTFR) from Gallus gallus (Chicken).